Here is a 176-residue protein sequence, read N- to C-terminus: Large ribosomal subunit protein uL16 (176 aa).

It belongs to the universal ribosomal protein uL16 family.

The chain is Large ribosomal subunit protein uL16 from Halorubrum lacusprofundi (strain ATCC 49239 / DSM 5036 / JCM 8891 / ACAM 34).